We begin with the raw amino-acid sequence, 391 residues long: 3-ketoacyl-CoA thiolase (391 aa).

Residue C95 is the Acyl-thioester intermediate of the active site. Active-site proton acceptor residues include H347 and C377.

This sequence belongs to the thiolase-like superfamily. Thiolase family. As to quaternary structure, heterotetramer of two alpha chains (FadB) and two beta chains (FadA).

The protein localises to the cytoplasm. It catalyses the reaction an acyl-CoA + acetyl-CoA = a 3-oxoacyl-CoA + CoA. The protein operates within lipid metabolism; fatty acid beta-oxidation. Functionally, catalyzes the final step of fatty acid oxidation in which acetyl-CoA is released and the CoA ester of a fatty acid two carbons shorter is formed. The polypeptide is 3-ketoacyl-CoA thiolase (Marinomonas sp. (strain MWYL1)).